A 1084-amino-acid chain; its full sequence is Putative tRNA-specific 2-thiouridylase (1084 aa).

3 helical membrane-spanning segments follow: residues 1 to 21 (MLIFFFFFFFFKYIYNIFILT), 32 to 52 (FIISFIFSTLMFFYFCTFYVI), and 309 to 329 (IITIDAYSNNLILYCFLYLIL). Cys-538 acts as the Nucleophile in catalysis. A disulfide bridge connects residues Cys-538 and Cys-715. The Cysteine persulfide intermediate role is filled by Cys-715.

Belongs to the MnmA/TRMU family.

Its subcellular location is the plastid. It is found in the apicoplast. It localises to the membrane. The enzyme catalyses S-sulfanyl-L-cysteinyl-[protein] + uridine(34) in tRNA + AH2 + ATP = 2-thiouridine(34) in tRNA + L-cysteinyl-[protein] + A + AMP + diphosphate + H(+). Functionally, catalyzes the 2-thiolation of uridine at the wobble position (U34) of tRNA, leading to the formation of s(2)U34. Required for apicoplast maintenance. This is Putative tRNA-specific 2-thiouridylase from Plasmodium falciparum (isolate 3D7).